A 384-amino-acid polypeptide reads, in one-letter code: MQFKPAVTALVSAVALATLLSGCKKEEAAPAAQAPQVGVVTIQPQAFTLTSELPGRTSAYRVAEVRPQVNGIILKRLFKEGSEVKEGQQLYQIDPAVYEATLANAKANLLATRSLAERYKQLIDEQAVSKQEYDDANAKRLQAEASLKSAQIDLRYTKVLAPISGRIGRSSFTEGALVSNGQTDAMATIQQLDPIYVDVTQSTAELLKLRRDLESGQLQKAGNNAASVQLVLEDGSLFKQEGRLEFSEVAVDETTGSVTLRALFPNPDHTLLPGMFVHARLKAGVNANAILAPQQGVTRDLKGAPTALVVNQENKVELRQLKASRTLGSDWLIEEGLNPGDRLITEGLQYVRPGVEVKVSDATNVKKPAGPDQANAAKADAKAE.

The N-terminal stretch at 1–22 (MQFKPAVTALVSAVALATLLSG) is a signal peptide. The N-palmitoyl cysteine moiety is linked to residue C23. C23 is lipidated: S-diacylglycerol cysteine. The stretch at 115–155 (LAERYKQLIDEQAVSKQEYDDANAKRLQAEASLKSAQIDLR) forms a coiled coil. The segment at 362–384 (ATNVKKPAGPDQANAAKADAKAE) is disordered. Residues 368–378 (PAGPDQANAAK) are compositionally biased toward low complexity.

This sequence belongs to the membrane fusion protein (MFP) (TC 8.A.1) family.

It localises to the cell inner membrane. In terms of biological role, the periplasmic linker protein component of a constitutive organic solvent efflux system. Involved in export of toluene, styrene, m-xylene, propylbenzene and ethylbenzene. Also exports AMP and the antibiotics carbenicillin, nalidixic acid, chloramphenicol and tetracycline. In Pseudomonas putida (strain DOT-T1E), this protein is Toluene efflux pump periplasmic linker protein TtgA (ttgA).